The sequence spans 488 residues: Serine/threonine-protein kinase haspin homolog hrk1 (488 aa).

The Protein kinase domain occupies 156-488 (TFEIQKIGEA…SLLNWVRQKY (333 aa)). Residues 162-170 (IGEASYSEV) and K184 each bind ATP. Residue D305 is the Proton acceptor of the active site.

Belongs to the protein kinase superfamily. Ser/Thr protein kinase family. Haspin subfamily. As to quaternary structure, interacts with pds5 and swi6.

Its subcellular location is the cytoplasm. It is found in the chromosome. It catalyses the reaction L-seryl-[protein] + ATP = O-phospho-L-seryl-[protein] + ADP + H(+). The enzyme catalyses L-threonyl-[protein] + ATP = O-phospho-L-threonyl-[protein] + ADP + H(+). Serine/threonine haspin-like protein kinase involved in cell cycle regulation. Acts in chromosomal passenger complex (CPC) targeting to centromeres by phosphorylating histone H3 at 'Thr3' (H3T3ph). The chain is Serine/threonine-protein kinase haspin homolog hrk1 (hrk1) from Schizosaccharomyces pombe (strain 972 / ATCC 24843) (Fission yeast).